Reading from the N-terminus, the 158-residue chain is NAD(P)H-quinone oxidoreductase subunit J, chloroplastic (158 aa).

Belongs to the complex I 30 kDa subunit family. As to quaternary structure, NDH is composed of at least 16 different subunits, 5 of which are encoded in the nucleus.

Its subcellular location is the plastid. The protein resides in the chloroplast thylakoid membrane. It catalyses the reaction a plastoquinone + NADH + (n+1) H(+)(in) = a plastoquinol + NAD(+) + n H(+)(out). The enzyme catalyses a plastoquinone + NADPH + (n+1) H(+)(in) = a plastoquinol + NADP(+) + n H(+)(out). Functionally, NDH shuttles electrons from NAD(P)H:plastoquinone, via FMN and iron-sulfur (Fe-S) centers, to quinones in the photosynthetic chain and possibly in a chloroplast respiratory chain. The immediate electron acceptor for the enzyme in this species is believed to be plastoquinone. Couples the redox reaction to proton translocation, and thus conserves the redox energy in a proton gradient. This is NAD(P)H-quinone oxidoreductase subunit J, chloroplastic from Cryptomeria japonica (Japanese cedar).